The following is a 208-amino-acid chain: Small ribosomal subunit protein uS4 (208 aa).

The 62-residue stretch at 98–159 (RRLDNVVYRL…KSRKIVSIND (62 aa)) folds into the S4 RNA-binding domain.

The protein belongs to the universal ribosomal protein uS4 family. In terms of assembly, part of the 30S ribosomal subunit. Contacts protein S5. The interaction surface between S4 and S5 is involved in control of translational fidelity.

Functionally, one of the primary rRNA binding proteins, it binds directly to 16S rRNA where it nucleates assembly of the body of the 30S subunit. In terms of biological role, with S5 and S12 plays an important role in translational accuracy. The polypeptide is Small ribosomal subunit protein uS4 (Pelobacter propionicus (strain DSM 2379 / NBRC 103807 / OttBd1)).